A 207-amino-acid polypeptide reads, in one-letter code: Dephospho-CoA kinase (207 aa).

The DPCK domain maps to 12–207; it reads LIGITGMIGG…LYSTLLGKML (196 aa). Residue 20-25 coordinates ATP; the sequence is GGGKST.

Belongs to the CoaE family.

It is found in the cytoplasm. The catalysed reaction is 3'-dephospho-CoA + ATP = ADP + CoA + H(+). The protein operates within cofactor biosynthesis; coenzyme A biosynthesis; CoA from (R)-pantothenate: step 5/5. In terms of biological role, catalyzes the phosphorylation of the 3'-hydroxyl group of dephosphocoenzyme A to form coenzyme A. The chain is Dephospho-CoA kinase from Leptospira interrogans serogroup Icterohaemorrhagiae serovar copenhageni (strain Fiocruz L1-130).